Reading from the N-terminus, the 644-residue chain is Arginine--tRNA ligase (644 aa).

Residues alanine 129–histidine 139 carry the 'HIGH' region motif.

The protein belongs to the class-I aminoacyl-tRNA synthetase family.

The protein localises to the cytoplasm. It catalyses the reaction tRNA(Arg) + L-arginine + ATP = L-arginyl-tRNA(Arg) + AMP + diphosphate. The polypeptide is Arginine--tRNA ligase (argS) (Aeropyrum pernix (strain ATCC 700893 / DSM 11879 / JCM 9820 / NBRC 100138 / K1)).